Consider the following 306-residue polypeptide: Phosphoribosylaminoimidazole-succinocarboxamide synthase (306 aa).

Position 2 is an N-acetylserine (Ser-2).

This sequence belongs to the SAICAR synthetase family. As to quaternary structure, monomer.

It catalyses the reaction 5-amino-1-(5-phospho-D-ribosyl)imidazole-4-carboxylate + L-aspartate + ATP = (2S)-2-[5-amino-1-(5-phospho-beta-D-ribosyl)imidazole-4-carboxamido]succinate + ADP + phosphate + 2 H(+). The protein operates within purine metabolism; IMP biosynthesis via de novo pathway; 5-amino-1-(5-phospho-D-ribosyl)imidazole-4-carboxamide from 5-amino-1-(5-phospho-D-ribosyl)imidazole-4-carboxylate: step 1/2. Catalyzes the reaction of 4-carboxy-5-aminoimidazole ribotide (CAIR) and aspartic acid with the formation of N-succinyl-5-amino-imidazole-4-carboxamide ribotide (SAICAR) in the purine biosynthesis pathway. The chain is Phosphoribosylaminoimidazole-succinocarboxamide synthase (ADE1) from Saccharomyces cerevisiae (strain ATCC 204508 / S288c) (Baker's yeast).